The primary structure comprises 427 residues: Dihydroorotase (427 aa).

His58 and His60 together coordinate Zn(2+). Residues 60-62 (HLR) and Asn92 each bind substrate. Residues Asp150, His177, and His230 each contribute to the Zn(2+) site. Position 276 (Asn276) interacts with substrate. Asp303 provides a ligand contact to Zn(2+). The active site involves Asp303. Residues His307 and 321 to 322 (FG) each bind substrate.

The protein belongs to the metallo-dependent hydrolases superfamily. DHOase family. Class I DHOase subfamily. Zn(2+) is required as a cofactor.

It carries out the reaction (S)-dihydroorotate + H2O = N-carbamoyl-L-aspartate + H(+). Its pathway is pyrimidine metabolism; UMP biosynthesis via de novo pathway; (S)-dihydroorotate from bicarbonate: step 3/3. Functionally, catalyzes the reversible cyclization of carbamoyl aspartate to dihydroorotate. This Macrococcus caseolyticus (strain JCSC5402) (Macrococcoides caseolyticum) protein is Dihydroorotase.